The sequence spans 425 residues: Glutamyl-tRNA reductase (425 aa).

Substrate-binding positions include T49 to R52, S106, E111 to Q113, and Q117. The active-site Nucleophile is the C50. G186–I191 lines the NADP(+) pocket.

It belongs to the glutamyl-tRNA reductase family. As to quaternary structure, homodimer.

The enzyme catalyses (S)-4-amino-5-oxopentanoate + tRNA(Glu) + NADP(+) = L-glutamyl-tRNA(Glu) + NADPH + H(+). It functions in the pathway porphyrin-containing compound metabolism; protoporphyrin-IX biosynthesis; 5-aminolevulinate from L-glutamyl-tRNA(Glu): step 1/2. Functionally, catalyzes the NADPH-dependent reduction of glutamyl-tRNA(Glu) to glutamate 1-semialdehyde (GSA). The chain is Glutamyl-tRNA reductase from Saccharophagus degradans (strain 2-40 / ATCC 43961 / DSM 17024).